Here is a 263-residue protein sequence, read N- to C-terminus: Endonuclease 8 (263 aa).

P2 serves as the catalytic Schiff-base intermediate with DNA. E3 (proton donor) is an active-site residue. K53 acts as the Proton donor; for beta-elimination activity in catalysis. 3 residues coordinate DNA: Q70, R125, and N169. Residues 229-263 (KVFHRDGEPCERCGGIIEKTTLSSRPFYWCPGCQH) form an FPG-type zinc finger. Catalysis depends on R253, which acts as the Proton donor; for delta-elimination activity.

This sequence belongs to the FPG family. Requires Zn(2+) as cofactor.

The catalysed reaction is 2'-deoxyribonucleotide-(2'-deoxyribose 5'-phosphate)-2'-deoxyribonucleotide-DNA = a 3'-end 2'-deoxyribonucleotide-(2,3-dehydro-2,3-deoxyribose 5'-phosphate)-DNA + a 5'-end 5'-phospho-2'-deoxyribonucleoside-DNA + H(+). Functionally, involved in base excision repair of DNA damaged by oxidation or by mutagenic agents. Acts as a DNA glycosylase that recognizes and removes damaged bases. Has a preference for oxidized pyrimidines, such as thymine glycol, 5,6-dihydrouracil and 5,6-dihydrothymine. Has AP (apurinic/apyrimidinic) lyase activity and introduces nicks in the DNA strand. Cleaves the DNA backbone by beta-delta elimination to generate a single-strand break at the site of the removed base with both 3'- and 5'-phosphates. This Escherichia coli (strain UTI89 / UPEC) protein is Endonuclease 8.